Here is a 50-residue protein sequence, read N- to C-terminus: U2-ctenitoxin-Pk1a (50 aa).

Disulfide bonds link cysteine 1/cysteine 15, cysteine 8/cysteine 21, cysteine 12/cysteine 47, cysteine 14/cysteine 31, and cysteine 23/cysteine 29.

In terms of tissue distribution, expressed by the venom gland.

The protein resides in the secreted. In terms of biological role, insecticidal neurotoxin that reversibly inhibits the N-methyl-D-aspartate (NMDA)-subtype of ionotropic glutamate receptor (GRIN) and inhibits inactivation of insect sodium channels (Nav). In vivo, is highly toxic to insects. This is U2-ctenitoxin-Pk1a from Phoneutria keyserlingi (Brazilian wandering spider).